Consider the following 657-residue polypeptide: Pyoverdine export ATP-binding/permease protein PvdT (657 aa).

An ABC transporter domain is found at 6–245 (IDLRGIRKSY…RSVNPAALQA (240 aa)). 43–50 (GASGSGKS) contacts ATP. The next 4 membrane-spanning stretches (helical) occupy residues 285–305 (ALTL…LAVG), 539–559 (IAAI…LMTV), 590–610 (LSVV…AALL), and 620–640 (LPAV…FGFM).

This sequence belongs to the ABC transporter superfamily. Macrolide exporter (TC 3.A.1.122) family. In terms of assembly, part of the tripartite efflux system PvdRT-OpmQ, which is composed of an inner membrane component with both ATPase and permease domains, PvdT, a periplasmic membrane fusion protein, PvdR, and an outer membrane component, OpmQ.

The protein localises to the cell inner membrane. Its function is as follows. Part of the tripartite efflux system PvdRT-OpmQ required for the secretion into the extracellular milieu of the siderophore pyoverdine (PVD), which is involved in iron acquisition. This subunit binds PVD and drives its secretion by hydrolyzing ATP. The system is responsible for export of newly synthesized PVD after the final steps of biosynthesis have taken place in the periplasm. It is also responsible for recycling of PVD after internalization of ferri-PVD into the periplasm by the outer-membrane receptor FpvA and release of iron from PVD, thus making PVD available for new cycles of iron uptake. In Pseudomonas syringae pv. syringae (strain B728a), this protein is Pyoverdine export ATP-binding/permease protein PvdT.